A 455-amino-acid polypeptide reads, in one-letter code: Venom prothrombin activator notecarin-D1 (455 aa).

The N-terminal stretch at 1 to 20 (MAPQLLLCLILTFLWSLPEA) is a signal peptide. The propeptide occupies 21–40 (ESNVFLKSKVANRFLQRTKR). The 46-residue stretch at 41 to 86 (SNSLFEEIRPGNIERECIEEKCSKEEAREVFEDNEKTETFWNVYVD) folds into the Gla domain. 11 positions are modified to 4-carboxyglutamate: Glu-46, Glu-47, Glu-54, Glu-56, Glu-59, Glu-60, Glu-65, Glu-66, Glu-69, Glu-72, and Glu-75. A disulfide bridge links Cys-57 with Cys-62. The EGF-like 1; calcium-binding domain occupies 86–122 (DGDQCSSNPCHYRGTCKDGIGSYTCTCLPNYEGKNCE). 11 disulfides stabilise this stretch: Cys-90–Cys-101, Cys-95–Cys-110, Cys-112–Cys-121, Cys-129–Cys-140, Cys-136–Cys-149, Cys-151–Cys-164, Cys-172–Cys-328, Cys-216–Cys-221, Cys-236–Cys-252, Cys-376–Cys-390, and Cys-401–Cys-429. A glycan (O-linked (Hex...) serine) is linked at Ser-92. Residues 129–164 (CRVDNGNCWHFCKRVQSETQCSCAESYRLGVDGHSC) form the EGF-like 2 domain. The propeptide at 182–209 (REASLPDFVQSQKATLLKKSDNPSPDIR) is activation peptide. The 244-residue stretch at 210-453 (IVNGMDCKLG…FIPWIKKIMS (244 aa)) folds into the Peptidase S1 domain. His-251 serves as the catalytic Charge relay system. Asn-254 is a glycosylation site (N-linked (GlcNAc...) asparagine). Asp-308 serves as the catalytic Charge relay system. Ser-405 functions as the Charge relay system in the catalytic mechanism.

Belongs to the peptidase S1 family. Snake venom subfamily. As to quaternary structure, heterodimer of a light chain and a heavy chain; disulfide-linked. In terms of processing, gamma-carboxyglutamate residues are formed by vitamin K dependent carboxylation. These residues are essential for the binding of calcium. As to expression, expressed by the venom gland.

It localises to the secreted. It catalyses the reaction Selective cleavage of Arg-|-Thr and then Arg-|-Ile bonds in prothrombin to form thrombin.. In terms of biological role, snake prothrombin activator that attacks the hemostatic system of prey. This protein is functionally similar to blood coagulation factor Xa. The protein is Venom prothrombin activator notecarin-D1 of Notechis scutatus scutatus (Mainland tiger snake).